The sequence spans 429 residues: Cyclin-B2-2 (429 aa).

The disordered stretch occupies residues 66–98; sequence SQRKQESCDKKKLDSLHPSISRSQEETKKLKPS. The span at 68 to 80 shows a compositional bias: basic and acidic residues; that stretch reads RKQESCDKKKLDS.

It belongs to the cyclin family. Cyclin AB subfamily. As to quaternary structure, interacts with CDC20-1 and CDC20-2. As to expression, expressed in roots.

This Arabidopsis thaliana (Mouse-ear cress) protein is Cyclin-B2-2 (CYCB2-2).